The primary structure comprises 375 residues: Succinyl-diaminopimelate desuccinylase (375 aa).

Zn(2+) is bound at residue His66. Asp68 is an active-site residue. Residue Asp99 coordinates Zn(2+). Glu133 functions as the Proton acceptor in the catalytic mechanism. Zn(2+) is bound by residues Glu134, Glu162, and His348.

Belongs to the peptidase M20A family. DapE subfamily. In terms of assembly, homodimer. Zn(2+) is required as a cofactor. The cofactor is Co(2+).

The catalysed reaction is N-succinyl-(2S,6S)-2,6-diaminopimelate + H2O = (2S,6S)-2,6-diaminopimelate + succinate. It functions in the pathway amino-acid biosynthesis; L-lysine biosynthesis via DAP pathway; LL-2,6-diaminopimelate from (S)-tetrahydrodipicolinate (succinylase route): step 3/3. Functionally, catalyzes the hydrolysis of N-succinyl-L,L-diaminopimelic acid (SDAP), forming succinate and LL-2,6-diaminopimelate (DAP), an intermediate involved in the bacterial biosynthesis of lysine and meso-diaminopimelic acid, an essential component of bacterial cell walls. In Herminiimonas arsenicoxydans, this protein is Succinyl-diaminopimelate desuccinylase.